The primary structure comprises 215 residues: ATP phosphoribosyltransferase (215 aa).

Belongs to the ATP phosphoribosyltransferase family. Short subfamily. In terms of assembly, heteromultimer composed of HisG and HisZ subunits.

The protein resides in the cytoplasm. It catalyses the reaction 1-(5-phospho-beta-D-ribosyl)-ATP + diphosphate = 5-phospho-alpha-D-ribose 1-diphosphate + ATP. It functions in the pathway amino-acid biosynthesis; L-histidine biosynthesis; L-histidine from 5-phospho-alpha-D-ribose 1-diphosphate: step 1/9. Its function is as follows. Catalyzes the condensation of ATP and 5-phosphoribose 1-diphosphate to form N'-(5'-phosphoribosyl)-ATP (PR-ATP). Has a crucial role in the pathway because the rate of histidine biosynthesis seems to be controlled primarily by regulation of HisG enzymatic activity. The chain is ATP phosphoribosyltransferase (hisG) from Clostridium acetobutylicum (strain ATCC 824 / DSM 792 / JCM 1419 / IAM 19013 / LMG 5710 / NBRC 13948 / NRRL B-527 / VKM B-1787 / 2291 / W).